The primary structure comprises 559 residues: Small ribosomal subunit protein bS1 (559 aa).

6 S1 motif domains span residues 21 to 87 (GAII…LSRE), 105 to 171 (DEVV…VSRR), 192 to 260 (GQQV…LGLK), 277 to 347 (GTRV…LGIK), 364 to 434 (GDRI…LGIK), and 451 to 520 (GSIV…LSVK).

Belongs to the bacterial ribosomal protein bS1 family.

Functionally, binds mRNA; thus facilitating recognition of the initiation point. It is needed to translate mRNA with a short Shine-Dalgarno (SD) purine-rich sequence. This Pseudomonas aeruginosa (strain ATCC 15692 / DSM 22644 / CIP 104116 / JCM 14847 / LMG 12228 / 1C / PRS 101 / PAO1) protein is Small ribosomal subunit protein bS1 (rpsA).